Consider the following 458-residue polypeptide: Neuronal acetylcholine receptor subunit beta-3 (458 aa).

An N-terminal signal peptide occupies residues 1–21 (MLPDFMLVLIVLGIPSSATTG). At 22 to 237 (FNSIAENEDA…VLRRLPLFYT (216 aa)) the chain is on the extracellular side. Residues asparagine 51, asparagine 138, and asparagine 166 are each glycosylated (N-linked (GlcNAc...) asparagine). Residues cysteine 153 and cysteine 167 are joined by a disulfide bond. 3 consecutive transmembrane segments (helical) span residues 238-258 (LFLIIPCLGLSFLTVLVFYLP), 267-287 (LSTSVLVSLTVFLLVIEEIIP), and 300-320 (LLFIMIFVTLSIIVTVFVINV). Residues 321–428 (HHRSSSTYHP…WKFVAQVLDR (108 aa)) lie on the Cytoplasmic side of the membrane. The helical transmembrane segment at 429 to 449 (IFLWLFLIVSVTGSVLIFTPA) threads the bilayer.

Belongs to the ligand-gated ion channel (TC 1.A.9) family. Acetylcholine receptor (TC 1.A.9.1) subfamily. Beta-3/CHRNB3 sub-subfamily. Neuronal AChR seems to be composed of two different type of subunits: alpha and beta. CHRNB3/beta-3 subunit is only able to form functional nAChRs when co-assembled with another beta subunit. Participates in pentameric assemblies along with CHRNA4/alpha-4 and CHRNB2/beta-2 subunits and with CHRNA6/alpha-6 as well, forming stoichiometries such as (CHRNA3:CHRNB4)2:CHRNB3, (CHRNA4:CHRNB2)2:CHRNB3 or (CHRNA6:CHRNB2)2:CHRNB3.

The protein resides in the synaptic cell membrane. Its subcellular location is the cell membrane. It carries out the reaction Ca(2+)(in) = Ca(2+)(out). The enzyme catalyses K(+)(in) = K(+)(out). It catalyses the reaction Na(+)(in) = Na(+)(out). Activated by a myriad of ligands such as acetylcholine, cytisine, nicotine, choline and epibatidine. In terms of biological role, component of neuronal acetylcholine receptors (nAChRs) that function as pentameric, ligand-gated cation channels with high calcium permeability among other activities. nAChRs are excitatory neurotrasnmitter receptors formed by a collection of nAChR subunits known to mediate synaptic transmission in the nervous system and the neuromuscular junction. Each nAchR subunit confers differential attributes to channel properties, including activation, deactivation and desensitization kinetics, pH sensitivity, cation permeability, and binding to allosteric modulators. Has an accessory rather than functional role and is only able to form functional nAChRs when co-assembled with another beta subunit. Participates in pentameric assemblies along with CHRNA3, CHRNA4, CHRNA6, CHRNB2 and CHRNB4. Modulates receptor assembly and increases receptor sensitivity to nicotine when associated with CHRNB2, CHRNA4 and/or CHRNA6 as well as CHRNA3 and CHRNB4. Seems to play a role in nicotine addiction. The polypeptide is Neuronal acetylcholine receptor subunit beta-3 (Homo sapiens (Human)).